The following is a 309-amino-acid chain: Protoheme IX farnesyltransferase (309 aa).

The next 9 helical transmembrane spans lie at 35–55 (IGIV…AFYF), 64–84 (LHLV…SCAI), 114–134 (VLWL…MTTV), 135–155 (TAAV…TLWT), 161–181 (INTV…WTAV), 187–207 (IVPL…FLAL), 231–251 (MTKR…FYLF), 253–273 (LGVP…LLGL), and 289–309 (FVYS…ATLW).

The protein belongs to the UbiA prenyltransferase family. Protoheme IX farnesyltransferase subfamily. As to quaternary structure, interacts with CtaA.

It localises to the cell membrane. It carries out the reaction heme b + (2E,6E)-farnesyl diphosphate + H2O = Fe(II)-heme o + diphosphate. It participates in porphyrin-containing compound metabolism; heme O biosynthesis; heme O from protoheme: step 1/1. In terms of biological role, converts heme B (protoheme IX) to heme O by substitution of the vinyl group on carbon 2 of heme B porphyrin ring with a hydroxyethyl farnesyl side group. The polypeptide is Protoheme IX farnesyltransferase (Geobacillus kaustophilus (strain HTA426)).